The primary structure comprises 328 residues: Ketol-acid reductoisomerase (NADP(+)) (328 aa).

Positions 1–179 (MRVLYERDGD…GGGAAGIIET (179 aa)) constitute a KARI N-terminal Rossmann domain. NADP(+) is bound by residues 24 to 27 (YGSQ), R47, and S51. Residue H106 is part of the active site. Residue G132 coordinates NADP(+). Residues 180–325 (TFVDETETDL…ARLRSRMTCA (146 aa)) enclose the KARI C-terminal knotted domain. Mg(2+) contacts are provided by D188, E192, E224, and E228. A substrate-binding site is contributed by S249.

The protein belongs to the ketol-acid reductoisomerase family. Requires Mg(2+) as cofactor.

The enzyme catalyses (2R)-2,3-dihydroxy-3-methylbutanoate + NADP(+) = (2S)-2-acetolactate + NADPH + H(+). The catalysed reaction is (2R,3R)-2,3-dihydroxy-3-methylpentanoate + NADP(+) = (S)-2-ethyl-2-hydroxy-3-oxobutanoate + NADPH + H(+). Its pathway is amino-acid biosynthesis; L-isoleucine biosynthesis; L-isoleucine from 2-oxobutanoate: step 2/4. It functions in the pathway amino-acid biosynthesis; L-valine biosynthesis; L-valine from pyruvate: step 2/4. Its function is as follows. Involved in the biosynthesis of branched-chain amino acids (BCAA). Catalyzes an alkyl-migration followed by a ketol-acid reduction of (S)-2-acetolactate (S2AL) to yield (R)-2,3-dihydroxy-isovalerate. In the isomerase reaction, S2AL is rearranged via a Mg-dependent methyl migration to produce 3-hydroxy-3-methyl-2-ketobutyrate (HMKB). In the reductase reaction, this 2-ketoacid undergoes a metal-dependent reduction by NADPH to yield (R)-2,3-dihydroxy-isovalerate. The polypeptide is Ketol-acid reductoisomerase (NADP(+)) (Tremblaya princeps).